Consider the following 485-residue polypeptide: uncharacterized protein (485 aa).

The next 3 membrane-spanning stretches (helical) occupy residues 284-304 (LLALNGLFTLMISHNLDYPLF), 328-348 (LLDLFLSSTHLPATLIASFIK), and 353-373 (LALTAPPGAIAIVIPFIYNCL).

It belongs to the CBF/MAK21 family.

The protein localises to the membrane. This is an uncharacterized protein from Schizosaccharomyces pombe (strain 972 / ATCC 24843) (Fission yeast).